The sequence spans 146 residues: Ribonuclease H (146 aa).

One can recognise an RNase H type-1 domain in the interval 1–141 (MKHVDIFTDG…ADELARKGME (141 aa)). Asp-9, Glu-47, Asp-69, and Asp-133 together coordinate Mg(2+). The segment at 123–146 (HAGHPENERADELARKGMEPFKRR) is disordered. Positions 125–146 (GHPENERADELARKGMEPFKRR) are enriched in basic and acidic residues.

This sequence belongs to the RNase H family. Monomer. Mg(2+) serves as cofactor.

The protein resides in the cytoplasm. It carries out the reaction Endonucleolytic cleavage to 5'-phosphomonoester.. Its function is as follows. Endonuclease that specifically degrades the RNA of RNA-DNA hybrids. The chain is Ribonuclease H from Agrobacterium fabrum (strain C58 / ATCC 33970) (Agrobacterium tumefaciens (strain C58)).